Consider the following 92-residue polypeptide: MAKRTKKVGIVGKYGTRYGASLRKVVKKQEVSQHSKFFCDFCGKYGMKRKAVGIWSCKGCNKTKAGGAYSLNTGGSVTVRSTIRRLREATEK.

A C4-type zinc finger spans residues 39 to 60; sequence CDFCGKYGMKRKAVGIWSCKGC.

The protein belongs to the eukaryotic ribosomal protein eL43 family.

The chain is Large ribosomal subunit protein eL43 (RPL37a) from Ostreococcus lucimarinus (strain CCE9901).